A 112-amino-acid chain; its full sequence is Protein ECM19 (112 aa).

The chain crosses the membrane as a helical span at residues asparagine 35–phenylalanine 57. The segment at glutamate 82–glutamine 112 is disordered. The span at alanine 98–glutamine 112 shows a compositional bias: pro residues.

Its subcellular location is the mitochondrion membrane. May be involved in cell wall organization and biogenesis. This Saccharomyces cerevisiae (strain ATCC 204508 / S288c) (Baker's yeast) protein is Protein ECM19 (ECM19).